The following is a 307-amino-acid chain: Membrane protein insertase YidC 2 (307 aa).

An N-terminal signal peptide occupies residues 1–23 (MKLTLNRILFSGLALSILFTLTG). Residue Cys-24 is the site of N-palmitoyl cysteine attachment. Cys-24 carries S-diacylglycerol cysteine lipidation. 5 helical membrane passes run 58–78 (LGYGLAIIIVTIIVRTLILPL), 135–155 (LGGIGCLPLLIQMPFFSAMYF), 179–199 (VLTAIIAALYFFQSWLSMMAV), 209–225 (TMMYTMPIMMIFMSFSL), and 231–251 (LYWLVGGFFSIIQQLITTYLL). The disordered stretch occupies residues 263–307 (YAKTPPKAYQSTSSRKDVTPSQNMEQANLPKKIKSNRNAGKQRKR). A compositionally biased stretch (polar residues) spans 271–288 (YQSTSSRKDVTPSQNMEQ). Over residues 293–307 (KKIKSNRNAGKQRKR) the composition is skewed to basic residues.

Belongs to the OXA1/ALB3/YidC family. Type 2 subfamily.

The protein localises to the cell membrane. Functionally, required for the insertion and/or proper folding and/or complex formation of integral membrane proteins into the membrane. Involved in integration of membrane proteins that insert both dependently and independently of the Sec translocase complex, as well as at least some lipoproteins. This is Membrane protein insertase YidC 2 from Streptococcus pyogenes serotype M18 (strain MGAS8232).